A 66-amino-acid chain; its full sequence is Large ribosomal subunit protein uL29 (66 aa).

The protein belongs to the universal ribosomal protein uL29 family.

This Helicobacter pylori (strain Shi470) protein is Large ribosomal subunit protein uL29.